Here is a 112-residue protein sequence, read N- to C-terminus: UPF0342 protein SP_1372 (112 aa).

The protein belongs to the UPF0342 family.

The sequence is that of UPF0342 protein SP_1372 from Streptococcus pneumoniae serotype 4 (strain ATCC BAA-334 / TIGR4).